The chain runs to 430 residues: Target of rapamycin complex 1 subunit toc1 (430 aa).

Residues serine 204 and serine 399 each carry the phosphoserine modification.

In terms of assembly, the target of rapamycin complex 1 (TORC1) is composed of at least mip1, pop3/wat1, tco89, toc1 and tor2.

The protein resides in the cytoplasm. Its function is as follows. Component of TORC1, which regulates multiple cellular processes to control cell growth in response to environmental signals. Tor2 is essential for growth. Nutrient limitation and environmental stress signals cause inactivation of TORC1. Active TORC1 positively controls cell growth and ribosome biogenesis by regulating ribosomal protein gene expression. TORC1 negatively controls G1 cell-cycle arrest, sexual development and amino acid uptake. Represses mating, meiosis and sporulation efficiency by interfering with the functions of the transcription factor ste11 and the meiosis-promoting RNA-binding protein mei2. This is Target of rapamycin complex 1 subunit toc1 from Schizosaccharomyces pombe (strain 972 / ATCC 24843) (Fission yeast).